Reading from the N-terminus, the 396-residue chain is Gamma-D-glutamyl-L-diamino acid endopeptidase 1 (396 aa).

2 LysM domains span residues 1 to 45 (MDIL…RIQI) and 51 to 95 (TSYT…TIQV). Residues 108-394 (QNYDYSMMMN…EALGIFLAGL (287 aa)) enclose the Peptidase M14 domain. H162 and E165 together coordinate Zn(2+). Residue D255 coordinates substrate. H307 provides a ligand contact to Zn(2+). Y347 functions as the Proton donor in the catalytic mechanism. The active-site Proton donor/acceptor is E366.

This sequence belongs to the peptidase M14 family. Zn(2+) serves as cofactor.

It carries out the reaction Hydrolysis of gamma-D-glutamyl bonds to the L-terminus (position 7) of meso-diaminopimelic acid (meso-A2pm) in 7-(L-Ala-gamma-D-Glu)-meso-A2pm and 7-(L-Ala-gamma-D-Glu)-7-(D-Ala)-meso-A2pm. It is required that the D-terminal amino and carboxy groups of meso-A2pm are unsubstituted.. An endopeptidase which hydrolyzes the gamma-D-Glu-(L)meso-diaminopimelic acid bond of L-Ala-gamma-D-Glu-(L)meso-diaminopimelic acid and L-Ala-gamma-D-Glu-(L)meso-diaminopimelic acid(L)-D-Ala peptides. It is active on spore cortex peptidoglycan. The polypeptide is Gamma-D-glutamyl-L-diamino acid endopeptidase 1 (Lysinibacillus sphaericus (Bacillus sphaericus)).